A 935-amino-acid chain; its full sequence is Protein translocase subunit SecA (935 aa).

ATP contacts are provided by residues Gln-90, 108-112 (GEGKT), and Asp-504. Residues 543–568 (GGRRPQGFGTSKKKGKNWSPSDADIF) form a disordered region.

It belongs to the SecA family. Monomer and homodimer. Part of the essential Sec protein translocation apparatus which comprises SecA, SecYEG and auxiliary proteins SecDF. Other proteins may also be involved.

The protein localises to the cell inner membrane. The protein resides in the cellular thylakoid membrane. Its subcellular location is the cytoplasm. It carries out the reaction ATP + H2O + cellular proteinSide 1 = ADP + phosphate + cellular proteinSide 2.. Part of the Sec protein translocase complex. Interacts with the SecYEG preprotein conducting channel. Has a central role in coupling the hydrolysis of ATP to the transfer of proteins into and across the cell membrane, serving as an ATP-driven molecular motor driving the stepwise translocation of polypeptide chains across the membrane. Its function is as follows. Probably participates in protein translocation into and across both the cytoplasmic and thylakoid membranes in cyanobacterial cells. The protein is Protein translocase subunit SecA of Rippkaea orientalis (strain PCC 8801 / RF-1) (Cyanothece sp. (strain PCC 8801)).